An 813-amino-acid chain; its full sequence is Striatin-interacting protein 1 homolog (813 aa).

Disordered stretches follow at residues 1–41 and 307–379; these read MDGV…SEAP and RAAS…RDEV. Residues 9–18 show a composition bias toward polar residues; that stretch reads NNKQKQNQML. The span at 22-35 shows a compositional bias: basic and acidic residues; it reads MRGEFTRNQRKDSE. Residues 307–316 show a composition bias toward low complexity; that stretch reads RAASPPASAS. Phosphoserine is present on serine 310. Residues 331-352 are compositionally biased toward basic and acidic residues; it reads KALIKQDNLDTFNEKDPYKADD. The segment covering 353 to 367 has biased composition (acidic residues); the sequence is SHEDEEENDDNDNSL.

This sequence belongs to the STRIP family. In terms of assembly, part of the core of STRIPAK complexes composed of PP2A catalytic and scaffolding subunits, the striatins (PP2A regulatory subunits), the striatin-associated proteins MOB4, STRIP1 and STRIP2, PDCD10 and members of the STE20 kinases, such as STK24 and STK26.

It is found in the cytoplasm. Its function is as follows. Plays a role in the regulation of cell morphology and cytoskeletal organization. Required in the cortical actin filament dynamics and cell shape. Part of the striatin-interacting phosphatase and kinase (STRIPAK) complexes. STRIPAK complexes have critical roles in protein (de)phosphorylation and are regulators of multiple signaling pathways including Hippo, MAPK, nuclear receptor and cytoskeleton remodeling. Different types of STRIPAK complexes are involved in a variety of biological processes such as cell growth, differentiation, apoptosis, metabolism and immune regulation. In Danio rerio (Zebrafish), this protein is Striatin-interacting protein 1 homolog (strip1).